Consider the following 137-residue polypeptide: Ribosome-binding factor A (137 aa).

It belongs to the RbfA family. In terms of assembly, monomer. Binds 30S ribosomal subunits, but not 50S ribosomal subunits or 70S ribosomes.

The protein resides in the cytoplasm. In terms of biological role, one of several proteins that assist in the late maturation steps of the functional core of the 30S ribosomal subunit. Associates with free 30S ribosomal subunits (but not with 30S subunits that are part of 70S ribosomes or polysomes). Required for efficient processing of 16S rRNA. May interact with the 5'-terminal helix region of 16S rRNA. The protein is Ribosome-binding factor A of Cereibacter sphaeroides (strain KD131 / KCTC 12085) (Rhodobacter sphaeroides).